The sequence spans 157 residues: Alpha-amylase/trypsin inhibitor RA16 (157 aa).

Residues Met1–Ala26 form the signal peptide. Cystine bridges form between Cys41-Cys89, Cys55-Cys77, Cys63-Cys121, Cys78-Cys137, and Cys91-Cys149.

Belongs to the cereal trypsin/alpha-amylase inhibitor family. Post-translationally, five disulfide bonds are present.

The protein localises to the secreted. Seed storage protein. The sequence is that of Alpha-amylase/trypsin inhibitor RA16 from Oryza sativa subsp. japonica (Rice).